A 112-amino-acid polypeptide reads, in one-letter code: Cytochrome c (112 aa).

Residues Cys-23, Cys-26, and His-27 each coordinate heme c. Lys-81 carries the N6,N6,N6-trimethyllysine modification. Met-89 lines the heme c pocket. The residue at position 95 (Lys-95) is an N6,N6,N6-trimethyllysine.

This sequence belongs to the cytochrome c family. In terms of processing, binds 1 heme c group covalently per subunit.

The protein localises to the mitochondrion intermembrane space. Functionally, electron carrier protein. The oxidized form of the cytochrome c heme group can accept an electron from the heme group of the cytochrome c1 subunit of cytochrome reductase. Cytochrome c then transfers this electron to the cytochrome oxidase complex, the final protein carrier in the mitochondrial electron-transport chain. The sequence is that of Cytochrome c (CC-1) from Arabidopsis thaliana (Mouse-ear cress).